Reading from the N-terminus, the 184-residue chain is Holliday junction branch migration complex subunit RuvA (184 aa).

The segment at 1–64 (MIKAIEGVVT…EDANLLYGFL (64 aa)) is domain I. A domain II region spans residues 65-134 (DANEQKMFEM…IAELSDTKLI (70 aa)). Positions 134–137 (ISDE) are flexible linker. Positions 138–184 (SVPSYQNEALLALEALGFKREKIVKILPDCKSENTSDLIKEALKKLG) are domain III.

It belongs to the RuvA family. In terms of assembly, homotetramer. Forms an RuvA(8)-RuvB(12)-Holliday junction (HJ) complex. HJ DNA is sandwiched between 2 RuvA tetramers; dsDNA enters through RuvA and exits via RuvB. An RuvB hexamer assembles on each DNA strand where it exits the tetramer. Each RuvB hexamer is contacted by two RuvA subunits (via domain III) on 2 adjacent RuvB subunits; this complex drives branch migration. In the full resolvosome a probable DNA-RuvA(4)-RuvB(12)-RuvC(2) complex forms which resolves the HJ.

It is found in the cytoplasm. Its function is as follows. The RuvA-RuvB-RuvC complex processes Holliday junction (HJ) DNA during genetic recombination and DNA repair, while the RuvA-RuvB complex plays an important role in the rescue of blocked DNA replication forks via replication fork reversal (RFR). RuvA specifically binds to HJ cruciform DNA, conferring on it an open structure. The RuvB hexamer acts as an ATP-dependent pump, pulling dsDNA into and through the RuvAB complex. HJ branch migration allows RuvC to scan DNA until it finds its consensus sequence, where it cleaves and resolves the cruciform DNA. The polypeptide is Holliday junction branch migration complex subunit RuvA (Campylobacter concisus (strain 13826)).